The chain runs to 668 residues: BTB/POZ domain-containing protein At5g66560 (668 aa).

The BTB domain occupies 21-133 (SDIEIEVDDM…CYGVKMDLSA (113 aa)). Residues 73 to 84 (ETDKKGKGHEIE) are compositionally biased toward basic and acidic residues. The interval 73–98 (ETDKKGKGHEIEDDKEEEEVEEQEIE) is disordered. The span at 85 to 98 (DDKEEEEVEEQEIE) shows a compositional bias: acidic residues. The NPH3 domain maps to 254–530 (ELWFEDLTQL…VQVLFFEQLQ (277 aa)). Residue tyrosine 471 is modified to Phosphotyrosine.

Belongs to the NPH3 family.

Its pathway is protein modification; protein ubiquitination. May act as a substrate-specific adapter of an E3 ubiquitin-protein ligase complex (CUL3-RBX1-BTB) which mediates the ubiquitination and subsequent proteasomal degradation of target proteins. In Arabidopsis thaliana (Mouse-ear cress), this protein is BTB/POZ domain-containing protein At5g66560.